Here is a 691-residue protein sequence, read N- to C-terminus: Elongation factor G (691 aa).

Residues 8–282 (EKTRNIGIMA…AVVDYLPSPV (275 aa)) enclose the tr-type G domain. GTP-binding positions include 17-24 (AHIDAGKT), 81-85 (DTPGH), and 135-138 (NKMD).

The protein belongs to the TRAFAC class translation factor GTPase superfamily. Classic translation factor GTPase family. EF-G/EF-2 subfamily.

Its subcellular location is the cytoplasm. Catalyzes the GTP-dependent ribosomal translocation step during translation elongation. During this step, the ribosome changes from the pre-translocational (PRE) to the post-translocational (POST) state as the newly formed A-site-bound peptidyl-tRNA and P-site-bound deacylated tRNA move to the P and E sites, respectively. Catalyzes the coordinated movement of the two tRNA molecules, the mRNA and conformational changes in the ribosome. The sequence is that of Elongation factor G from Caldicellulosiruptor bescii (strain ATCC BAA-1888 / DSM 6725 / KCTC 15123 / Z-1320) (Anaerocellum thermophilum).